The chain runs to 492 residues: N-succinylglutamate 5-semialdehyde dehydrogenase (492 aa).

An NAD(+)-binding site is contributed by Gly-220–Gly-225. Active-site residues include Glu-243 and Cys-277.

This sequence belongs to the aldehyde dehydrogenase family. AstD subfamily.

It carries out the reaction N-succinyl-L-glutamate 5-semialdehyde + NAD(+) + H2O = N-succinyl-L-glutamate + NADH + 2 H(+). The protein operates within amino-acid degradation; L-arginine degradation via AST pathway; L-glutamate and succinate from L-arginine: step 4/5. In terms of biological role, catalyzes the NAD-dependent reduction of succinylglutamate semialdehyde into succinylglutamate. The sequence is that of N-succinylglutamate 5-semialdehyde dehydrogenase from Shigella boydii serotype 18 (strain CDC 3083-94 / BS512).